A 96-amino-acid polypeptide reads, in one-letter code: uncharacterized protein (96 aa).

The helical transmembrane segment at 53–71 (VLLMPLLQSFVLSLALMGV) threads the bilayer.

The protein localises to the membrane. This is an uncharacterized protein from Saccharomyces cerevisiae (strain ATCC 204508 / S288c) (Baker's yeast).